Consider the following 475-residue polypeptide: UDP-N-acetylmuramate--L-alanine ligase (475 aa).

125-131 serves as a coordination point for ATP; that stretch reads GTHGKTT.

The protein belongs to the MurCDEF family.

It is found in the cytoplasm. It catalyses the reaction UDP-N-acetyl-alpha-D-muramate + L-alanine + ATP = UDP-N-acetyl-alpha-D-muramoyl-L-alanine + ADP + phosphate + H(+). It functions in the pathway cell wall biogenesis; peptidoglycan biosynthesis. Its function is as follows. Cell wall formation. This is UDP-N-acetylmuramate--L-alanine ligase from Actinobacillus pleuropneumoniae serotype 5b (strain L20).